The primary structure comprises 954 residues: Glycine dehydrogenase (decarboxylating) (954 aa).

Residue lysine 704 is modified to N6-(pyridoxal phosphate)lysine.

Belongs to the GcvP family. In terms of assembly, the glycine cleavage system is composed of four proteins: P, T, L and H. Pyridoxal 5'-phosphate is required as a cofactor.

The catalysed reaction is N(6)-[(R)-lipoyl]-L-lysyl-[glycine-cleavage complex H protein] + glycine + H(+) = N(6)-[(R)-S(8)-aminomethyldihydrolipoyl]-L-lysyl-[glycine-cleavage complex H protein] + CO2. In terms of biological role, the glycine cleavage system catalyzes the degradation of glycine. The P protein binds the alpha-amino group of glycine through its pyridoxal phosphate cofactor; CO(2) is released and the remaining methylamine moiety is then transferred to the lipoamide cofactor of the H protein. In Vibrio vulnificus (strain YJ016), this protein is Glycine dehydrogenase (decarboxylating).